The chain runs to 385 residues: Glucans biosynthesis protein C (385 aa).

Transmembrane regions (helical) follow at residues 17–37 (AWLMLLGIPFHISLIYSSHTW), 60–80 (MQVFFVISGYFSYMLFLRYPL), 91–111 (VGIPMLTAIPLLTLPQFIMLQ), 137–157 (ISHLWFLLVLVVMTTLCVWIF), 173–193 (KFSMVKLSVIFLCLGIGYAVI), 212–232 (FIVMQTLFYLPFFILGALAFI), 239–259 (LFTTPSRGCTFAAALAFVAYL), 274–294 (TESVITMVLGLWMVNVVFSFG), 311–331 (ASLFIYLVHHPLTLFFGAYIT), and 338–358 (WLGFLCGLIFVVGIAIILYEI).

It belongs to the acyltransferase 3 family. OpgC subfamily.

Its subcellular location is the cell membrane. Its pathway is glycan metabolism; osmoregulated periplasmic glucan (OPG) biosynthesis. Necessary for the succinyl substitution of periplasmic glucans. Could catalyze the transfer of succinyl residues from the cytoplasmic side of the membrane to the nascent glucan backbones on the periplasmic side of the membrane. This is Glucans biosynthesis protein C from Escherichia coli O45:K1 (strain S88 / ExPEC).